The primary structure comprises 72 residues: Translation initiation factor IF-1 (72 aa).

In terms of domain architecture, S1-like spans 1 to 72; sequence MAKDNVIEIE…SKGRITYRFK (72 aa).

The protein belongs to the IF-1 family. As to quaternary structure, component of the 30S ribosomal translation pre-initiation complex which assembles on the 30S ribosome in the order IF-2 and IF-3, IF-1 and N-formylmethionyl-tRNA(fMet); mRNA recruitment can occur at any time during PIC assembly.

The protein resides in the cytoplasm. Its function is as follows. One of the essential components for the initiation of protein synthesis. Stabilizes the binding of IF-2 and IF-3 on the 30S subunit to which N-formylmethionyl-tRNA(fMet) subsequently binds. Helps modulate mRNA selection, yielding the 30S pre-initiation complex (PIC). Upon addition of the 50S ribosomal subunit IF-1, IF-2 and IF-3 are released leaving the mature 70S translation initiation complex. The protein is Translation initiation factor IF-1 of Pediococcus pentosaceus (strain ATCC 25745 / CCUG 21536 / LMG 10740 / 183-1w).